A 430-amino-acid chain; its full sequence is T-kininogen 1 (430 aa).

The signal sequence occupies residues 1-18 (MKLITILLLCSRLLPSLA). Position 19 is a pyrrolidone carboxylic acid (Gln-19). The 104-residue stretch at 28–131 (CNDETVFQAV…TQICNITPGK (104 aa)) folds into the Cystatin kininogen-type 1 domain. Disulfide bonds link Cys-28–Cys-404, Cys-83–Cys-94, Cys-107–Cys-125, Cys-141–Cys-144, Cys-205–Cys-217, Cys-228–Cys-247, Cys-263–Cys-266, Cys-327–Cys-339, and Cys-350–Cys-369. The N-linked (GlcNAc...) asparagine glycan is linked to Asn-82. Positions 150–253 (MDSSDLKPVL…SQSCDLYPGD (104 aa)) constitute a Cystatin kininogen-type 2 domain. 2 N-linked (GlcNAc...) asparagine glycosylation sites follow: Asn-168 and Asn-204. The 104-residue stretch at 272 to 375 (VDSPELKEAL…TVRCQALDMM (104 aa)) folds into the Cystatin kininogen-type 3 domain. Asn-326 is a glycosylation site (N-linked (GlcNAc...) asparagine). Residues 411-430 (SKARAGPAPDHQAEASTVTP) are disordered.

Post-translationally, as T-kinin is preceded by a Met instead of an Arg or Lys, it is not released from its precursor by either tissue or plasma kallikrein. As to expression, plasma.

The protein resides in the secreted. It localises to the extracellular space. Functionally, kininogens are plasma glycoproteins with a number of functions: (1) as precursor of the active peptide bradykinin they effect smooth muscle contraction, induction of hypotension and increase of vascular permeability. (2) They play a role in blood coagulation by helping to position optimally prekallikrein and factor XI next to factor XII. (3) They are inhibitor of thiol proteases. This is T-kininogen 1 (Map1) from Rattus norvegicus (Rat).